The primary structure comprises 186 residues: Large ribosomal subunit protein uL22 (186 aa).

The tract at residues 159–186 (KATDEEPTKKKLSKKKLQRQKEKMMRSE) is disordered. Basic and acidic residues predominate over residues 177 to 186 (RQKEKMMRSE).

Belongs to the universal ribosomal protein uL22 family.

This Phlebotomus papatasi (Sandfly) protein is Large ribosomal subunit protein uL22 (RpL17).